The primary structure comprises 317 residues: Probable deoxyhypusine synthase 1 (317 aa).

Lysine 285 serves as the catalytic Nucleophile.

Belongs to the deoxyhypusine synthase family. The cofactor is NAD(+).

It carries out the reaction [eIF5A protein]-L-lysine + spermidine = [eIF5A protein]-deoxyhypusine + propane-1,3-diamine. It participates in protein modification; eIF5A hypusination. In terms of biological role, catalyzes the NAD-dependent oxidative cleavage of spermidine and the subsequent transfer of the butylamine moiety of spermidine to the epsilon-amino group of a specific lysine residue of the eIF-5A precursor protein to form the intermediate deoxyhypusine residue. In Methanosarcina acetivorans (strain ATCC 35395 / DSM 2834 / JCM 12185 / C2A), this protein is Probable deoxyhypusine synthase 1 (dys1).